A 503-amino-acid chain; its full sequence is ATP synthase subunit alpha (503 aa).

An ATP-binding site is contributed by 170 to 177; the sequence is GDRQTGKT.

It belongs to the ATPase alpha/beta chains family. F-type ATPases have 2 components, CF(1) - the catalytic core - and CF(0) - the membrane proton channel. CF(1) has five subunits: alpha(3), beta(3), gamma(1), delta(1), epsilon(1). CF(0) has three main subunits: a(1), b(2) and c(9-12). The alpha and beta chains form an alternating ring which encloses part of the gamma chain. CF(1) is attached to CF(0) by a central stalk formed by the gamma and epsilon chains, while a peripheral stalk is formed by the delta and b chains.

Its subcellular location is the cell inner membrane. It catalyses the reaction ATP + H2O + 4 H(+)(in) = ADP + phosphate + 5 H(+)(out). Functionally, produces ATP from ADP in the presence of a proton gradient across the membrane. The alpha chain is a regulatory subunit. The protein is ATP synthase subunit alpha of Geobacter metallireducens (strain ATCC 53774 / DSM 7210 / GS-15).